The chain runs to 423 residues: Glucose-1-phosphate adenylyltransferase (423 aa).

Alpha-D-glucose 1-phosphate contacts are provided by residues tyrosine 110, glycine 175, 190-191 (EK), and serine 208.

It belongs to the bacterial/plant glucose-1-phosphate adenylyltransferase family. Homotetramer.

It catalyses the reaction alpha-D-glucose 1-phosphate + ATP + H(+) = ADP-alpha-D-glucose + diphosphate. Its pathway is glycan biosynthesis; glycogen biosynthesis. Its function is as follows. Involved in the biosynthesis of ADP-glucose, a building block required for the elongation reactions to produce glycogen. Catalyzes the reaction between ATP and alpha-D-glucose 1-phosphate (G1P) to produce pyrophosphate and ADP-Glc. The chain is Glucose-1-phosphate adenylyltransferase from Nitrosococcus oceani (strain ATCC 19707 / BCRC 17464 / JCM 30415 / NCIMB 11848 / C-107).